A 373-amino-acid polypeptide reads, in one-letter code: MKIVADENIPFVNELFEPIGEILLRPGREITPADVKNADILLVRSVTPVNAALLEGSKVQFVGTCTIGTDHLDKAYLDERDIAYSSAPGCNAGGVVQYALSAMAVLGLLQDSPSKDFKVAVVGCGNVGSRVYRTLSALGYDCIGVDPFLDTSTIPHLQPFEAIYDCDLICCHTPLTRSGPAPTEHMFNTDVFNHLKSGATLLNAGRGGVIDNRALLQYLNTHNDLTVVLDVWESEPDILVELLDAVALGSTHIAGYSYEGRINGSLMIHRALIDYLLAHGEHPEDTRRAIEAYVAKDKETINVTSFADAVLATYDVRDDDALLRQAVQGLPASFDMLRKQYRKRREFSHYQIEAAPPKLMPLLQSLGYGVVAK.

Substrate-binding residues include S45 and T66. NAD(+)-binding residues include D146 and T173. R206 is an active-site residue. An NAD(+)-binding site is contributed by D230. E235 is an active-site residue. Residue H252 is the Proton donor of the active site. G255 contributes to the NAD(+) binding site. Y256 serves as a coordination point for substrate.

Belongs to the D-isomer specific 2-hydroxyacid dehydrogenase family. PdxB subfamily. Homodimer.

It localises to the cytoplasm. It carries out the reaction 4-phospho-D-erythronate + NAD(+) = (R)-3-hydroxy-2-oxo-4-phosphooxybutanoate + NADH + H(+). It functions in the pathway cofactor biosynthesis; pyridoxine 5'-phosphate biosynthesis; pyridoxine 5'-phosphate from D-erythrose 4-phosphate: step 2/5. Its function is as follows. Catalyzes the oxidation of erythronate-4-phosphate to 3-hydroxy-2-oxo-4-phosphonooxybutanoate. This is Erythronate-4-phosphate dehydrogenase from Saccharophagus degradans (strain 2-40 / ATCC 43961 / DSM 17024).